Here is a 55-residue protein sequence, read N- to C-terminus: Large ribosomal subunit protein bL33 (55 aa).

Belongs to the bacterial ribosomal protein bL33 family.

In Azorhizobium caulinodans (strain ATCC 43989 / DSM 5975 / JCM 20966 / LMG 6465 / NBRC 14845 / NCIMB 13405 / ORS 571), this protein is Large ribosomal subunit protein bL33.